The following is a 128-amino-acid chain: CD59 glycoprotein (128 aa).

Residues 1 to 25 (MGIQGGSVLFGLLLVLAVFCHSGHS) form the signal peptide. Positions 26-108 (LQCYNCPNPT…QLENGGTSLS (83 aa)) constitute a UPAR/Ly6 domain. 3 disulfides stabilise this stretch: Cys28–Cys51, Cys31–Cys38, and Cys44–Cys64. An N-linked (GlcNAc...) asparagine glycan is attached at Asn43. Lys66 carries N-linked (Glc) (glycation) lysine glycosylation. Disulfide bonds link Cys70–Cys88 and Cys89–Cys94. O-linked (GalNAc...) threonine glycans are attached at residues Thr76 and Thr77. Asn102 carries the GPI-anchor amidated asparagine lipid modification. The propeptide at 103–128 (GGTSLSEKTVLLLVTPFLAAAWSLHP) is removed in mature form.

In terms of assembly, interacts with T-cell surface antigen CD2. Post-translationally, N- and O-glycosylated. The N-glycosylation mainly consists of a family of biantennary complex-type structures with and without lactosamine extensions and outer arm fucose residues. Also significant amounts of triantennary complexes (22%). Variable sialylation also present in the Asn-43 oligosaccharide. The predominant O-glycans are mono-sialylated forms of the disaccharide, Gal-beta-1,3GalNAc, and their sites of attachment are probably on Thr-76 and Thr-77. The GPI-anchor of soluble urinary CD59 has no inositol-associated phospholipid, but is composed of seven different GPI-anchor variants of one or more monosaccharide units. Major variants contain sialic acid, mannose and glucosamine. Sialic acid linked to an N-acetylhexosamine-galactose arm is present in two variants. Glycated. Glycation is found in diabetic subjects, but only at minimal levels in nondiabetic subjects. Glycated CD59 lacks MAC-inhibitory function and confers to vascular complications of diabetes.

The protein resides in the cell membrane. The protein localises to the secreted. Functionally, potent inhibitor of the complement membrane attack complex (MAC) action, which protects human cells from damage during complement activation. Acts by binding to the beta-haipins of C8 (C8A and C8B) components of the assembling MAC, forming an intermolecular beta-sheet that prevents incorporation of the multiple copies of C9 required for complete formation of the osmolytic pore. In terms of biological role, the soluble form from urine retains its specific complement binding activity, but exhibits greatly reduced ability to inhibit complement membrane attack complex (MAC) assembly on cell membranes. The polypeptide is CD59 glycoprotein (Homo sapiens (Human)).